The sequence spans 364 residues: Putative [LysW]-aminoadipate semialdehyde/glutamate semialdehyde transaminase (364 aa).

Residues 90–91 and phenylalanine 117 contribute to the pyridoxal 5'-phosphate site; that span reads GT. Arginine 120 serves as a coordination point for substrate. Pyridoxal 5'-phosphate is bound at residue 202–205; it reads DEVQ. An N6-(pyridoxal phosphate)lysine modification is found at lysine 230. Serine 254 serves as a coordination point for substrate. A pyridoxal 5'-phosphate-binding site is contributed by threonine 255.

Belongs to the class-III pyridoxal-phosphate-dependent aminotransferase family. LysJ subfamily. In terms of assembly, homodimer. It depends on pyridoxal 5'-phosphate as a cofactor.

Its subcellular location is the cytoplasm. It carries out the reaction [amino-group carrier protein]-C-terminal-gamma-(L-lysyl)-L-glutamate + 2-oxoglutarate = [amino-group carrier protein]-C-terminal-N-(1-carboxy-5-oxopentan-1-yl)-L-glutamine + L-glutamate. The catalysed reaction is [amino-group carrier protein]-C-terminal-gamma-(L-ornithyl)-L-glutamate + 2-oxoglutarate = [amino-group carrier protein]-C-terminal-gamma-(L-glutamyl-5-semialdehyde)-L-glutamate + L-glutamate. The protein operates within amino-acid biosynthesis; L-lysine biosynthesis via AAA pathway; L-lysine from L-alpha-aminoadipate (Thermus route): step 4/5. Its pathway is amino-acid biosynthesis; L-arginine biosynthesis. In terms of biological role, involved in both the arginine and lysine biosynthetic pathways. The polypeptide is Putative [LysW]-aminoadipate semialdehyde/glutamate semialdehyde transaminase (Pyrococcus abyssi (strain GE5 / Orsay)).